A 142-amino-acid polypeptide reads, in one-letter code: Galectin-16 (142 aa).

The region spanning 6–138 is the Galectin domain; sequence VPYKLPVSLS…DVSLDSVLVN (133 aa).

As to expression, predominantly and highly expressed in the placenta where it is localized mainly in the syncytiotrophoblast and in the endothelia of fetal vessels. Also detected in the amnion and chorionic trophoblasts in fetal membranes.

In terms of biological role, binds lactose with high affinity. Strong inducer of T-cell apoptosis. The sequence is that of Galectin-16 from Homo sapiens (Human).